Here is a 554-residue protein sequence, read N- to C-terminus: Phenylalanine--tRNA ligase beta subunit (554 aa).

The B5 domain occupies 276-351 (LSLKSRMISV…INYGYEKFEG (76 aa)). Positions 329, 335, 338, and 339 each coordinate Mg(2+).

The protein belongs to the phenylalanyl-tRNA synthetase beta subunit family. Type 2 subfamily. As to quaternary structure, tetramer of two alpha and two beta subunits. Requires Mg(2+) as cofactor.

The protein localises to the cytoplasm. It catalyses the reaction tRNA(Phe) + L-phenylalanine + ATP = L-phenylalanyl-tRNA(Phe) + AMP + diphosphate + H(+). The sequence is that of Phenylalanine--tRNA ligase beta subunit from Methanococcus maripaludis (strain C5 / ATCC BAA-1333).